Here is a 111-residue protein sequence, read N- to C-terminus: Ig kappa chain V region 3368 (111 aa).

The framework-1 stretch occupies residues 1-24; the sequence is ADIVMTQTPSSVSAAVGGTVTIKC. Positions 25 to 35 are complementarity-determining-1; it reads QASESIGNELA. Residues 36–50 are framework-2; the sequence is WYQQKPGQPPKLLIY. Positions 51-57 are complementarity-determining-2; sequence RASKLAS. A framework-3 region spans residues 58 to 89; it reads GVSSRFKGSGSGTEFTLTISGVQCDDAGIYYC. Residues 90–101 form a complementarity-determining-3 region; the sequence is QQDWNSNNVVNN. Residues 102-111 form a framework-4 region; it reads FGGGTEVVVK.

The sequence is that of Ig kappa chain V region 3368 from Oryctolagus cuniculus (Rabbit).